The primary structure comprises 272 residues: Cytochrome c oxidase subunit 3 (272 aa).

A run of 7 helical transmembrane segments spans residues 23–43 (PWPF…VMYM), 45–65 (AYVN…LVMF), 91–111 (FGVI…FWAF), 137–157 (WEIP…VTWC), 169–189 (SVLS…FQAY), 210–230 (ATGF…VCLI), and 249–269 (AWYW…IYWW).

It belongs to the cytochrome c oxidase subunit 3 family. Component of the cytochrome c oxidase (complex IV, CIV), a multisubunit enzyme composed of a catalytic core of 3 subunits and several supernumerary subunits. The complex exists as a monomer or a dimer and forms supercomplexes (SCs) in the inner mitochondrial membrane with ubiquinol-cytochrome c oxidoreductase (cytochrome b-c1 complex, complex III, CIII).

The protein localises to the mitochondrion inner membrane. It catalyses the reaction 4 Fe(II)-[cytochrome c] + O2 + 8 H(+)(in) = 4 Fe(III)-[cytochrome c] + 2 H2O + 4 H(+)(out). Its function is as follows. Component of the cytochrome c oxidase, the last enzyme in the mitochondrial electron transport chain which drives oxidative phosphorylation. The respiratory chain contains 3 multisubunit complexes succinate dehydrogenase (complex II, CII), ubiquinol-cytochrome c oxidoreductase (cytochrome b-c1 complex, complex III, CIII) and cytochrome c oxidase (complex IV, CIV), that cooperate to transfer electrons derived from NADH and succinate to molecular oxygen, creating an electrochemical gradient over the inner membrane that drives transmembrane transport and the ATP synthase. Cytochrome c oxidase is the component of the respiratory chain that catalyzes the reduction of oxygen to water. Electrons originating from reduced cytochrome c in the intermembrane space (IMS) are transferred via the dinuclear copper A center (CU(A)) of subunit 2 and heme A of subunit 1 to the active site in subunit 1, a binuclear center (BNC) formed by heme A3 and copper B (CU(B)). The BNC reduces molecular oxygen to 2 water molecules using 4 electrons from cytochrome c in the IMS and 4 protons from the mitochondrial matrix. The chain is Cytochrome c oxidase subunit 3 (COX3) from Chondrus crispus (Carrageen Irish moss).